A 779-amino-acid chain; its full sequence is Acyl-homoserine lactone acylase PvdQ (779 aa).

The signal sequence occupies residues 1–25 (MIISRPLCGFVFAGLSFAVILPAQA). Residues 202-223 (SQQVQALQLAAVRNQRFALERG) constitute a propeptide, spacer peptide. Ser224 serves as the catalytic Nucleophile. Polar residues predominate over residues 731–746 (ESSNPQSAHSSDQTEA). The segment at 731 to 752 (ESSNPQSAHSSDQTEAFSKKQW) is disordered.

The protein belongs to the peptidase S45 family. As to quaternary structure, heterodimer of an alpha subunit and a beta subunit processed from the same precursor.

Its subcellular location is the periplasm. The enzyme catalyses an N-acyl-L-homoserine lactone + H2O = L-homoserine lactone + a carboxylate. Its function is as follows. Catalyzes the deacylation of acyl-homoserine lactone (AHL or acyl-HSL), releasing homoserine lactone (HSL) and the corresponding fatty acid. Possesses a specificity for the degradation of long-chain acyl-HSLs (side chains of 11 to 14 carbons in length). The sequence is that of Acyl-homoserine lactone acylase PvdQ (pvdQ) from Pseudomonas savastanoi pv. phaseolicola (strain 1448A / Race 6) (Pseudomonas syringae pv. phaseolicola (strain 1448A / Race 6)).